The chain runs to 170 residues: MNDQRKGDHAEPTTHFGYQDVPESQKAKKVAEVFHSVAAKYDLMNDVLSGGMHRLWKRFTIELSGVRAGNRVLDIAGGTGDLAAKFSRLVGPTGQVVLADINESMLKVGRDRLLDRGVAGNIEFVQADAEKLPFPDNHFDCVTIAFGLRNVTHKDEAIRSMLRVLKPGGR.

A compositionally biased stretch (basic and acidic residues) spans 1–12 (MNDQRKGDHAEP). The interval 1 to 22 (MNDQRKGDHAEPTTHFGYQDVP) is disordered.

It belongs to the class I-like SAM-binding methyltransferase superfamily. MenG/UbiE family.

It carries out the reaction a 2-demethylmenaquinol + S-adenosyl-L-methionine = a menaquinol + S-adenosyl-L-homocysteine + H(+). The enzyme catalyses a 2-methoxy-6-(all-trans-polyprenyl)benzene-1,4-diol + S-adenosyl-L-methionine = a 5-methoxy-2-methyl-3-(all-trans-polyprenyl)benzene-1,4-diol + S-adenosyl-L-homocysteine + H(+). The protein operates within quinol/quinone metabolism; menaquinone biosynthesis; menaquinol from 1,4-dihydroxy-2-naphthoate: step 2/2. It functions in the pathway cofactor biosynthesis; ubiquinone biosynthesis. Its function is as follows. Methyltransferase required for the conversion of demethylmenaquinol (DMKH2) to menaquinol (MKH2) and the conversion of 2-polyprenyl-6-methoxy-1,4-benzoquinol (DDMQH2) to 2-polyprenyl-3-methyl-6-methoxy-1,4-benzoquinol (DMQH2). The sequence is that of Ubiquinone/menaquinone biosynthesis C-methyltransferase UbiE (ubiE) from Ectopseudomonas oleovorans (Pseudomonas oleovorans).